The following is a 331-amino-acid chain: N-acetyl-alpha-D-glucosaminyl-diphospho-ditrans,octacis-undecaprenol 4-epimerase (331 aa).

Residues 13 to 14 (FV), 34 to 39 (QQSHFY), 47 to 48 (DV), Ser109, Tyr132, and Lys136 contribute to the NAD(+) site. The substrate site is built by Ser109 and Tyr132. Tyr132 acts as the Proton acceptor in catalysis. Substrate is bound by residues 183–184 (GK) and 199–201 (YVG).

The protein belongs to the NAD(P)-dependent epimerase/dehydratase family. The cofactor is NAD(+).

It is found in the cell membrane. The catalysed reaction is N-acetyl-alpha-D-glucosaminyl-di-trans,octa-cis-undecaprenyl diphosphate = N-acetyl-alpha-D-galactosaminyl-di-trans,octa-cis-undecaprenyl diphosphate. It functions in the pathway bacterial outer membrane biogenesis; LPS O-antigen biosynthesis. In terms of biological role, involved in biosynthesis of the repeating tetrasaccharide unit of the O-antigen. Catalyzes the reversible epimerization of the hydroxyl group at position C4 of undecaprenyl pyrophosphate-N-acetylglucosamine (UndPP-GlcNAc) to yield undecaprenyl pyrophosphate-N-acetylgalactosamine (UndPP-GalNAc). This chain is N-acetyl-alpha-D-glucosaminyl-diphospho-ditrans,octacis-undecaprenol 4-epimerase, found in Escherichia coli O157:H7.